The following is a 239-amino-acid chain: tRNA (guanine-N(7)-)-methyltransferase (239 aa).

4 residues coordinate S-adenosyl-L-methionine: E69, E94, D121, and D144. D144 is a catalytic residue. Residues K148, D180, and 217-220 (TKFE) contribute to the substrate site.

This sequence belongs to the class I-like SAM-binding methyltransferase superfamily. TrmB family. In terms of assembly, monomer.

It catalyses the reaction guanosine(46) in tRNA + S-adenosyl-L-methionine = N(7)-methylguanosine(46) in tRNA + S-adenosyl-L-homocysteine. It functions in the pathway tRNA modification; N(7)-methylguanine-tRNA biosynthesis. Functionally, catalyzes the formation of N(7)-methylguanine at position 46 (m7G46) in tRNA. This chain is tRNA (guanine-N(7)-)-methyltransferase, found in Buchnera aphidicola subsp. Acyrthosiphon pisum (strain Tuc7).